The sequence spans 338 residues: Serine/threonine-protein kinase YabT (338 aa).

Residues 28-286 enclose the Protein kinase domain; sequence YTLRKQLGKG…PIKASPQPAT (259 aa). ATP contacts are provided by residues 34 to 42 and Lys55; that span reads LGKGANGIV. Residue Asp148 is the Proton acceptor of the active site. Residues 266–312 form a disordered region; sequence DAGQKAAQRKQPIKASPQPATRQRQQKPRQGKITKTRYTPKQKPAKS. Basic residues predominate over residues 289 to 309; that stretch reads RQQKPRQGKITKTRYTPKQKP.

This sequence belongs to the protein kinase superfamily. Ser/Thr protein kinase family. Post-translationally, autophosphorylated.

The enzyme catalyses L-seryl-[protein] + ATP = O-phospho-L-seryl-[protein] + ADP + H(+). The catalysed reaction is L-threonyl-[protein] + ATP = O-phospho-L-threonyl-[protein] + ADP + H(+). Plays a role in the cell's commitment to sporulation; phosphorylates DNA replication initiation-control protein YabA. Deletion of this kinase delays entry into sporulation but does not affect final spore yield. Overexpression decreases biofilm formation; phosphorylation of YabA probably prevents biofilm formation. The sequence is that of Serine/threonine-protein kinase YabT (yabT) from Bacillus subtilis (strain 168).